The sequence spans 237 residues: Small ribosomal subunit protein uS2m (237 aa).

The protein belongs to the universal ribosomal protein uS2 family.

Its subcellular location is the mitochondrion. The sequence is that of Small ribosomal subunit protein uS2m (RPS2) from Marchantia polymorpha (Common liverwort).